The sequence spans 1135 residues: APC membrane recruitment protein 1 (1135 aa).

Methionine 1 carries the post-translational modification N-acetylmethionine. 7 disordered regions span residues methionine 1–glycine 115, alanine 156–proline 308, serine 339–aspartate 405, glycine 447–glycine 484, asparagine 736–asparagine 764, leucine 921–leucine 948, and valine 1007–lysine 1135. The segment covering glutamine 10–serine 19 has biased composition (low complexity). Residues glutamine 23–glutamate 35 show a composition bias toward basic and acidic residues. The span at alanine 36–glycine 50 shows a compositional bias: low complexity. Over residues phenylalanine 73–lysine 83 the composition is skewed to gly residues. Composition is skewed to basic and acidic residues over residues lysine 94–glutamate 107 and glycine 196–valine 208. Residues lysine 238 to proline 248 are compositionally biased toward pro residues. Serine 246 is subject to Phosphoserine. 2 stretches are compositionally biased toward basic and acidic residues: residues methionine 253 to methionine 262 and glutamate 282 to glutamate 291. Residues alanine 373–aspartate 405 are compositionally biased toward acidic residues. Positions threonine 455 to asparagine 466 are enriched in polar residues. The segment covering glutamate 926–glycine 938 has biased composition (acidic residues). The segment covering proline 1058 to proline 1069 has biased composition (low complexity). Positions serine 1119 to lysine 1135 are enriched in polar residues.

Belongs to the Amer family. In terms of assembly, interacts with CTNNB1, AXIN1, LRP6, KEAP1, APC and BTRC. Interacts with SCF (SKP1-CUL1-F-box protein) E3 ubiquitin-protein ligase complexes containing BTRC and/or FBXW11. Identified in the beta-catenin destruction complex containing CTNNB1, APC, AXIN1 and AXIN2. Interacts with WT1. As to expression, detected in fetal and adult kidney, brain and spleen.

The protein localises to the cytoplasm. Its subcellular location is the cell membrane. It is found in the nucleus. Its function is as follows. Regulator of the canonical Wnt signaling pathway. Acts by specifically binding phosphatidylinositol 4,5-bisphosphate (PtdIns(4,5)P2), translocating to the cell membrane and interacting with key regulators of the canonical Wnt signaling pathway, such as components of the beta-catenin destruction complex. Acts both as a positive and negative regulator of the Wnt signaling pathway, depending on the context: acts as a positive regulator by promoting LRP6 phosphorylation. Also acts as a negative regulator by acting as a scaffold protein for the beta-catenin destruction complex and promoting stabilization of Axin at the cell membrane. Promotes CTNNB1 ubiquitination and degradation. Involved in kidney development. This is APC membrane recruitment protein 1 (AMER1) from Homo sapiens (Human).